A 68-amino-acid polypeptide reads, in one-letter code: Protein transport protein Sec61 gamma-1 subunit (68 aa).

Residues 1–32 (MDKVVKFAEPGRAFAKDSIRLVKRCTKPDRKE) lie on the Cytoplasmic side of the membrane. A helical membrane pass occupies residues 33–61 (FQKIAIATAVGFAIMGFIGFFVKLIHIPI). Topologically, residues 62–68 (NNIIVGS) are extracellular.

The protein belongs to the SecE/SEC61-gamma family. Heterotrimeric complex composed of SEC61-alpha, SEC61-beta and SEC61-gamma.

It is found in the endoplasmic reticulum membrane. Functionally, necessary for protein translocation in the endoplasmic reticulum. This Drosophila melanogaster (Fruit fly) protein is Protein transport protein Sec61 gamma-1 subunit (SEC61G1).